Here is a 368-residue protein sequence, read N- to C-terminus: Protein HGH1 homolog (368 aa).

It belongs to the HGH1 family.

This Drosophila pseudoobscura pseudoobscura (Fruit fly) protein is Protein HGH1 homolog.